A 208-amino-acid polypeptide reads, in one-letter code: ATP phosphoribosyltransferase (208 aa).

Belongs to the ATP phosphoribosyltransferase family. Short subfamily. Heteromultimer composed of HisG and HisZ subunits.

It localises to the cytoplasm. It carries out the reaction 1-(5-phospho-beta-D-ribosyl)-ATP + diphosphate = 5-phospho-alpha-D-ribose 1-diphosphate + ATP. It participates in amino-acid biosynthesis; L-histidine biosynthesis; L-histidine from 5-phospho-alpha-D-ribose 1-diphosphate: step 1/9. In terms of biological role, catalyzes the condensation of ATP and 5-phosphoribose 1-diphosphate to form N'-(5'-phosphoribosyl)-ATP (PR-ATP). Has a crucial role in the pathway because the rate of histidine biosynthesis seems to be controlled primarily by regulation of HisG enzymatic activity. The polypeptide is ATP phosphoribosyltransferase (Oceanobacillus iheyensis (strain DSM 14371 / CIP 107618 / JCM 11309 / KCTC 3954 / HTE831)).